The following is a 1215-amino-acid chain: Inner capsid protein VP3 (1215 aa).

The interval 1–81 is disordered; sequence MPRRPRRNAK…RVDNDGDVIT (81 aa). A compositionally biased stretch (low complexity) spans 21 to 44; sequence LVAPAANASVSSTVNTTTSPTLAA. Residues 118–141 form a C2H2-type zinc finger; sequence YRCNVCNAEFPSMSAMTEHLRTSH.

This sequence belongs to the turreted BTV-fold inner capsid family. Homodecamer; each decamer is made up of two conformers of VP2, called VP2A and VP2B. 12 homodecamers assemble to form an icosahedral capsid. Interacts with VP6.

The protein resides in the virion. Inner capsid protein that self-assembles to form an icosahedral capsid with a T=2 symmetry, which consists of 120 copies of VP2, with channels at each of its five-fold vertices. This capsid constitutes the innermost concentric layer of the viral mature particle. The protein is Inner capsid protein VP3 (S3) of Ctenopharyngodon idella (Grass carp).